Consider the following 1461-residue polypeptide: Gag-Pro-Pol polyprotein (1461 aa).

Glycine 2 is lipidated: N-myristoyl glycine; by host. The short motif at 94 to 97 (PSAP) is the PTAP/PSAP motif element. The interval 94 to 121 (PSAPAAPVPTPICPTTTPPPPPPPSPEA) is disordered. Pro residues predominate over residues 97 to 121 (PAAPVPTPICPTTTPPPPPPPSPEA). The PPXY motif motif lies at 124–127 (PPPY). A PTAP/PSAP motif motif is present at residues 130-133 (PTTT). CCHC-type zinc fingers lie at residues 361–378 (QPCFRCGKVGHWSRDCTQ) and 384–401 (GPCPLCQDPSHWKRDCPQ). The disordered stretch occupies residues 399 to 425 (CPQLKPPQEEGEPLLLDLPSTSGTTEE). A Peptidase A2 domain is found at 473 to 551 (TQALLDTGAD…NKWTIIGRDA (79 aa)). Aspartate 478 functions as the For protease activity; shared with dimeric partner in the catalytic mechanism. Positions 612-802 (LEAGHIEPYS…GQIRFLGQVI (191 aa)) constitute a Reverse transcriptase domain. Aspartate 678, aspartate 753, aspartate 754, aspartate 1038, glutamate 1073, aspartate 1095, aspartate 1156, aspartate 1229, and aspartate 1286 together coordinate Mg(2+). The 136-residue stretch at 1029 to 1164 (LDTAPCLFSD…TDSLILAPLV (136 aa)) folds into the RNase H type-1 domain. Residues 1218–1387 (RGLLPNHIWQ…PPIPEASTPP (170 aa)) enclose the Integrase catalytic domain. The integrase-type DNA-binding region spans 1392–1441 (KWFYYKLPGLTNQRWKGPLQSLQEAAGAALLSIDGSPRWIPWRFLKKAAC).

In terms of assembly, homodimer; the homodimers are part of the immature particles. Interacts with human TSG101 and NEDD4; these interactions are essential for budding and release of viral particles. As to quaternary structure, homodimer; further assembles as homohexamers. Requires Mg(2+) as cofactor. In terms of processing, phosphorylation of the matrix protein p19 by MAPK1 seems to play a role in budding. Post-translationally, myristoylated. Myristoylation of the matrix (MA) domain mediates the transport and binding of Gag polyproteins to the host plasma membrane and is required for the assembly of viral particles. Specific enzymatic cleavages by the viral protease yield mature proteins. The polyprotein is cleaved during and after budding, this process is termed maturation. The protease is autoproteolytically processed at its N- and C-termini.

Its subcellular location is the virion. It catalyses the reaction Endonucleolytic cleavage to 5'-phosphomonoester.. It carries out the reaction DNA(n) + a 2'-deoxyribonucleoside 5'-triphosphate = DNA(n+1) + diphosphate. Functionally, the matrix domain targets Gag, Gag-Pro and Gag-Pro-Pol polyproteins to the plasma membrane via a multipartite membrane binding signal, that includes its myristoylated N-terminus. In terms of biological role, matrix protein. Forms the spherical core of the virus that encapsulates the genomic RNA-nucleocapsid complex. Its function is as follows. Binds strongly to viral nucleic acids and promote their aggregation. Also destabilizes the nucleic acids duplexes via highly structured zinc-binding motifs. Functionally, the aspartyl protease mediates proteolytic cleavages of Gag and Gag-Pol polyproteins during or shortly after the release of the virion from the plasma membrane. Cleavages take place as an ordered, step-wise cascade to yield mature proteins. This process is called maturation. Displays maximal activity during the budding process just prior to particle release from the cell (Potential). Cleaves the translation initiation factor eIF4G leading to the inhibition of host cap-dependent translation. In terms of biological role, RT is a multifunctional enzyme that converts the viral RNA genome into dsDNA in the cytoplasm, shortly after virus entry into the cell. This enzyme displays a DNA polymerase activity that can copy either DNA or RNA templates, and a ribonuclease H (RNase H) activity that cleaves the RNA strand of RNA-DNA heteroduplexes in a partially processive 3' to 5'-endonucleasic mode. Conversion of viral genomic RNA into dsDNA requires many steps. A tRNA-Pro binds to the primer-binding site (PBS) situated at the 5'-end of the viral RNA. RT uses the 3' end of the tRNA primer to perform a short round of RNA-dependent minus-strand DNA synthesis. The reading proceeds through the U5 region and ends after the repeated (R) region which is present at both ends of viral RNA. The portion of the RNA-DNA heteroduplex is digested by the RNase H, resulting in a ssDNA product attached to the tRNA primer. This ssDNA/tRNA hybridizes with the identical R region situated at the 3' end of viral RNA. This template exchange, known as minus-strand DNA strong stop transfer, can be either intra- or intermolecular. RT uses the 3' end of this newly synthesized short ssDNA to perform the RNA-dependent minus-strand DNA synthesis of the whole template. RNase H digests the RNA template except for a polypurine tract (PPT) situated at the 5' end of the genome. It is not clear if both polymerase and RNase H activities are simultaneous. RNase H probably can proceed both in a polymerase-dependent (RNA cut into small fragments by the same RT performing DNA synthesis) and a polymerase-independent mode (cleavage of remaining RNA fragments by free RTs). Secondly, RT performs DNA-directed plus-strand DNA synthesis using the PPT that has not been removed by RNase H as primer. PPT and tRNA primers are then removed by RNase H. The 3' and 5' ssDNA PBS regions hybridize to form a circular dsDNA intermediate. Strand displacement synthesis by RT to the PBS and PPT ends produces a blunt ended, linear dsDNA copy of the viral genome that includes long terminal repeats (LTRs) at both ends. Catalyzes viral DNA integration into the host chromosome, by performing a series of DNA cutting and joining reactions. This is Gag-Pro-Pol polyprotein (gag-pro-pol) from Human T-cell leukemia virus 2 (HTLV-2).